The chain runs to 400 residues: Beta-ketoadipyl-CoA thiolase (400 aa).

Cysteine 90 acts as the Acyl-thioester intermediate in catalysis. Active-site proton acceptor residues include histidine 356 and cysteine 386.

It belongs to the thiolase-like superfamily. Thiolase family.

The catalysed reaction is succinyl-CoA + acetyl-CoA = 3-oxoadipyl-CoA + CoA. It participates in aromatic compound metabolism; beta-ketoadipate pathway; acetyl-CoA and succinyl-CoA from 3-oxoadipate: step 2/2. Its function is as follows. Catalyzes thiolytic cleavage of beta-ketoadipyl-CoA to succinyl-CoA and acetyl-CoA. The sequence is that of Beta-ketoadipyl-CoA thiolase (pcaF) from Pseudomonas putida (Arthrobacter siderocapsulatus).